The primary structure comprises 558 residues: Nuclear speckle splicing regulatory protein 1 (558 aa).

Positions 21 to 54 (PVLQKPSVFGNDSDDDDETSVSESLQREAAKKQA) are disordered. Serine 27 and serine 33 each carry phosphoserine. Residues 104–170 (IHNLLKAVEI…REKRAAALEA (67 aa)) are a coiled coil. Residues 106-170 (NLLKAVEIRK…REKRAAALEA (65 aa)) form a necessary for alternative splicing activity region. Residues lysine 199 and lysine 210 each participate in a glycyl lysine isopeptide (Lys-Gly) (interchain with G-Cter in SUMO2) cross-link. Over residues 204–215 (EARSGIKEEKSR) the composition is skewed to basic and acidic residues. A disordered region spans residues 204-534 (EARSGIKEEK…KRNNEETVMS (331 aa)). Over residues 216-226 (GFSNEVSSKNR) the composition is skewed to polar residues. Phosphoserine occurs at positions 248, 254, and 255. The segment covering 250–280 (FDAKSSADDEIEETRVNCRREKVIETPENDF) has biased composition (basic and acidic residues). Position 275 is a phosphothreonine (threonine 275). Residue lysine 281 forms a Glycyl lysine isopeptide (Lys-Gly) (interchain with G-Cter in SUMO2) linkage. A compositionally biased stretch (basic residues) spans 299–310 (STRHHTKGSRTS). 3 stretches are compositionally biased toward basic and acidic residues: residues 311–442 (RGHE…KREV), 449–487 (RNQD…RNQE), and 501–517 (RLTE…ERPP). The stretch at 379–427 (KREKDREKYSQREQERDRQQNDQNRPSEKGEKEEKSKAKEEHMKVRKER) forms a coiled coil. Serine 457 carries the post-translational modification Phosphoserine.

The protein belongs to the NSRP1 family. Interacts (via C-terminus) with SRSF1. Interacts (via C-terminus) with SRSF2. In terms of tissue distribution, expressed in dendritic cells, T-cells, B-cells and natural killer cells. Expressed in secondary lymphoid organs such as spleen and mesenteric, axillary and brachial lymph nodes.

It is found in the nucleus. It localises to the nucleus speckle. RNA-binding protein that mediates pre-mRNA alternative splicing regulation. The protein is Nuclear speckle splicing regulatory protein 1 (NSRP1) of Homo sapiens (Human).